The chain runs to 156 residues: Transcription antitermination protein NusB (156 aa).

It belongs to the NusB family.

Functionally, involved in transcription antitermination. Required for transcription of ribosomal RNA (rRNA) genes. Binds specifically to the boxA antiterminator sequence of the ribosomal RNA (rrn) operons. The polypeptide is Transcription antitermination protein NusB (Syntrophotalea carbinolica (strain DSM 2380 / NBRC 103641 / GraBd1) (Pelobacter carbinolicus)).